We begin with the raw amino-acid sequence, 449 residues long: tRNA (guanine(37)-N(1))-methyltransferase (449 aa).

Residues H216, 254-255, 282-283, and N345 each bind S-adenosyl-L-methionine; these read DL and DG.

This sequence belongs to the class I-like SAM-binding methyltransferase superfamily. TRM5/TYW2 family. Monomer.

The protein localises to the mitochondrion matrix. Its subcellular location is the nucleus. It localises to the cytoplasm. It catalyses the reaction guanosine(37) in tRNA + S-adenosyl-L-methionine = N(1)-methylguanosine(37) in tRNA + S-adenosyl-L-homocysteine + H(+). In terms of biological role, specifically methylates the N1 position of guanosine-37 in various cytoplasmic and mitochondrial tRNAs. Methylation is not dependent on the nature of the nucleoside 5' of the target nucleoside. This is the first step in the biosynthesis of wybutosine (yW), a modified base adjacent to the anticodon of tRNAs and required for accurate decoding. The sequence is that of tRNA (guanine(37)-N(1))-methyltransferase from Candida albicans (strain SC5314 / ATCC MYA-2876) (Yeast).